The chain runs to 502 residues: ATP synthase subunit alpha (502 aa).

169–176 is a binding site for ATP; it reads GDRQTGKT.

This sequence belongs to the ATPase alpha/beta chains family. In terms of assembly, F-type ATPases have 2 components, CF(1) - the catalytic core - and CF(0) - the membrane proton channel. CF(1) has five subunits: alpha(3), beta(3), gamma(1), delta(1), epsilon(1). CF(0) has three main subunits: a(1), b(2) and c(9-12). The alpha and beta chains form an alternating ring which encloses part of the gamma chain. CF(1) is attached to CF(0) by a central stalk formed by the gamma and epsilon chains, while a peripheral stalk is formed by the delta and b chains.

It is found in the cell inner membrane. The enzyme catalyses ATP + H2O + 4 H(+)(in) = ADP + phosphate + 5 H(+)(out). In terms of biological role, produces ATP from ADP in the presence of a proton gradient across the membrane. The alpha chain is a regulatory subunit. The protein is ATP synthase subunit alpha of Thermodesulfovibrio yellowstonii (strain ATCC 51303 / DSM 11347 / YP87).